Here is a 487-residue protein sequence, read N- to C-terminus: UDP-glucosyl transferase 73CC6 (487 aa).

Histidine 17 (proton acceptor) is an active-site residue. Aspartate 114 acts as the Charge relay in catalysis. The UDP site is built by serine 282, tryptophan 346, alanine 347, histidine 364, asparagine 368, serine 369, glutamate 372, and tyrosine 386.

Belongs to the UDP-glycosyltransferase family. In terms of tissue distribution, mainly expressed in flowers and flower buds and, to a lesser extent, in leaves, stems and roots.

The protein operates within secondary metabolite biosynthesis; terpenoid biosynthesis. Functionally, component of the oleanane-type triterpene saponins (e.g. saponarioside A and saponarioside B) biosynthetic pathway, leading to the production of natural products with detergent properties used as traditional sources of soap. A glycosyltransferase that mediates the conversion of QA-di to QA-tri via the elongation of the C-3 sugar chain with a D-xylose. This is UDP-glucosyl transferase 73CC6 from Saponaria officinalis (Common soapwort).